The chain runs to 340 residues: N-acetyl-gamma-glutamyl-phosphate reductase (340 aa).

C151 is a catalytic residue.

The protein belongs to the NAGSA dehydrogenase family. Type 1 subfamily.

It is found in the cytoplasm. The catalysed reaction is N-acetyl-L-glutamate 5-semialdehyde + phosphate + NADP(+) = N-acetyl-L-glutamyl 5-phosphate + NADPH + H(+). It participates in amino-acid biosynthesis; L-arginine biosynthesis; N(2)-acetyl-L-ornithine from L-glutamate: step 3/4. Functionally, catalyzes the NADPH-dependent reduction of N-acetyl-5-glutamyl phosphate to yield N-acetyl-L-glutamate 5-semialdehyde. The polypeptide is N-acetyl-gamma-glutamyl-phosphate reductase (Aquifex aeolicus (strain VF5)).